Here is a 208-residue protein sequence, read N- to C-terminus: Ribosomal RNA small subunit methyltransferase G (208 aa).

S-adenosyl-L-methionine is bound by residues Gly77, Leu82, 128–129 (VE), and Arg142.

Belongs to the methyltransferase superfamily. RNA methyltransferase RsmG family.

The protein resides in the cytoplasm. The catalysed reaction is guanosine(527) in 16S rRNA + S-adenosyl-L-methionine = N(7)-methylguanosine(527) in 16S rRNA + S-adenosyl-L-homocysteine. Specifically methylates the N7 position of guanine in position 527 of 16S rRNA. The protein is Ribosomal RNA small subunit methyltransferase G of Chromohalobacter salexigens (strain ATCC BAA-138 / DSM 3043 / CIP 106854 / NCIMB 13768 / 1H11).